The chain runs to 223 residues: MFAVIKTGGKQYRVAAGDEIRIEKLEGAAGDTLDLGDVLMLGSEAGVTVGSPTIDGAQVIGELLDTNRARKIIVFKKRRRQNYRRTKGHRQWGTVVRIAEIVAPGEKAKTALKSTTAEPKAADAPKAKAKAAPKAEKAAAPKAEKAPAKKAAAPKAAAADALTELTGVGPALATKLNEAGITTFAQVAAWTEADLDALSETITGLKAKAEKNDWINAAKALAK.

Residues 110–149 (TALKSTTAEPKAADAPKAKAKAAPKAEKAAAPKAEKAPAK) form a disordered region. Over residues 133–147 (PKAEKAAAPKAEKAP) the composition is skewed to basic and acidic residues.

Belongs to the bacterial ribosomal protein bL21 family. As to quaternary structure, part of the 50S ribosomal subunit. Contacts protein L20.

In terms of biological role, this protein binds to 23S rRNA in the presence of protein L20. This is Large ribosomal subunit protein bL21 from Maricaulis maris (strain MCS10) (Caulobacter maris).